A 623-amino-acid chain; its full sequence is Phosphoglucomutase, chloroplastic (623 aa).

The N-terminal 63 residues, M1–G63, are a transit peptide targeting the chloroplast. Alpha-D-glucose 1,6-bisphosphate-binding residues include R88 and S181. The active-site Phosphoserine intermediate is the S181. Residues S181, D346, D348, and D350 each contribute to the Mg(2+) site. The residue at position 181 (S181) is a Phosphoserine. 6 residues coordinate alpha-D-glucose 1,6-bisphosphate: D350, R351, T414, E433, S435, and K446.

This sequence belongs to the phosphohexose mutase family. Monomer. Requires Mg(2+) as cofactor. As to expression, expressed in flowers, siliques and germinating seeds.

The protein resides in the plastid. It localises to the chloroplast. It carries out the reaction alpha-D-glucose 1-phosphate = alpha-D-glucose 6-phosphate. It catalyses the reaction O-phospho-L-seryl-[protein] + alpha-D-glucose 1-phosphate = alpha-D-glucose 1,6-bisphosphate + L-seryl-[protein]. The catalysed reaction is alpha-D-glucose 1,6-bisphosphate + L-seryl-[protein] = O-phospho-L-seryl-[protein] + alpha-D-glucose 6-phosphate. With respect to regulation, inhibited by the Calvin cycle intermediates fructose-1,6-bisphosphate and ribulose-1,5-bisphosphate. Its function is as follows. Catalyzes the reversible isomerization of alpha-D-glucose 1-phosphate to alpha-D-glucose 6-phosphate. The mechanism proceeds via the intermediate compound alpha-D-glucose 1,6-bisphosphate. This enzyme participates in both the breakdown and synthesis of glucose. Factor that affects seed oil content. Accumulated starch in young embryos may play an important role in providing carbon resources for seed storage lipid biosynthesis in oilseed plants. Promotes gravitropic responses, negative in shoots but positive in roots, by facilitating starch granules (statoliths) formation in hypocotyls and roots columella. This is Phosphoglucomutase, chloroplastic from Arabidopsis thaliana (Mouse-ear cress).